The primary structure comprises 278 residues: Pantothenate synthetase (278 aa).

26-33 (MGNLHEGH) serves as a coordination point for ATP. His-33 acts as the Proton donor in catalysis. Residue Gln-57 coordinates (R)-pantoate. Position 57 (Gln-57) interacts with beta-alanine. An ATP-binding site is contributed by 144–147 (GKKD). Gln-150 is a binding site for (R)-pantoate. ATP-binding positions include Gly-173 and 181–184 (LSSR).

This sequence belongs to the pantothenate synthetase family. Homodimer.

The protein localises to the cytoplasm. The enzyme catalyses (R)-pantoate + beta-alanine + ATP = (R)-pantothenate + AMP + diphosphate + H(+). The protein operates within cofactor biosynthesis; (R)-pantothenate biosynthesis; (R)-pantothenate from (R)-pantoate and beta-alanine: step 1/1. Its function is as follows. Catalyzes the condensation of pantoate with beta-alanine in an ATP-dependent reaction via a pantoyl-adenylate intermediate. In Neisseria meningitidis serogroup A / serotype 4A (strain DSM 15465 / Z2491), this protein is Pantothenate synthetase.